The chain runs to 129 residues: Iron-sulfur cluster assembly 1 homolog, mitochondrial (129 aa).

A mitochondrion-targeting transit peptide spans 1 to 12 (MSASLVRATVRA). Cys-57, Cys-121, and Cys-123 together coordinate Fe cation.

It belongs to the HesB/IscA family. As to quaternary structure, interacts with CRY2, but not with CRY1 (in vitro).

It localises to the mitochondrion. Involved in the maturation of mitochondrial 4Fe-4S proteins functioning late in the iron-sulfur cluster assembly pathway. Probably involved in the binding of an intermediate of Fe/S cluster assembly. This Mus musculus (Mouse) protein is Iron-sulfur cluster assembly 1 homolog, mitochondrial (Isca1).